A 572-amino-acid chain; its full sequence is Hemagglutinin-neuraminidase (572 aa).

The Intravirion portion of the chain corresponds to 1 to 31 (MEYWKHTNHGKDACNELGTSMATHGNKITNK). Residues 32 to 52 (ITYILWTIILVLLSIIFIIVL) traverse the membrane as a helical segment. The Virion surface portion of the chain corresponds to 53 to 572 (INSIKSEKAH…FKTEIPKSCS (520 aa)). Intrachain disulfides connect C190–C214 and C256–C269. The interval 252–257 (NRKSCS) is involved in neuraminidase activity. N308 and N351 each carry an N-linked (GlcNAc...) asparagine; by host glycan. 2 cysteine pairs are disulfide-bonded: C355-C469 and C463-C473. N523 carries N-linked (GlcNAc...) asparagine; by host glycosylation. A disulfide bridge connects residues C535 and C544.

It belongs to the paramyxoviruses hemagglutinin-neuraminidase family. Homotetramer; composed of disulfide-linked homodimers. Interacts with F protein trimer.

It is found in the virion membrane. It localises to the host cell membrane. The enzyme catalyses Hydrolysis of alpha-(2-&gt;3)-, alpha-(2-&gt;6)-, alpha-(2-&gt;8)- glycosidic linkages of terminal sialic acid residues in oligosaccharides, glycoproteins, glycolipids, colominic acid and synthetic substrates.. Its function is as follows. Attaches the virus to sialic acid-containing cell receptors and thereby initiating infection. Binding of HN protein to the receptor induces a conformational change that allows the F protein to trigger virion/cell membranes fusion. Functionally, neuraminidase activity ensures the efficient spread of the virus by dissociating the mature virions from the neuraminic acid containing glycoproteins. The sequence is that of Hemagglutinin-neuraminidase (HN) from Homo sapiens (Human).